The sequence spans 464 residues: UPF0210 protein Cgl1545/cg1743 (464 aa).

Belongs to the UPF0210 family. As to quaternary structure, homodimer.

This is UPF0210 protein Cgl1545/cg1743 from Corynebacterium glutamicum (strain ATCC 13032 / DSM 20300 / JCM 1318 / BCRC 11384 / CCUG 27702 / LMG 3730 / NBRC 12168 / NCIMB 10025 / NRRL B-2784 / 534).